The sequence spans 87 residues: Small ribosomal subunit protein bS20 (87 aa).

A disordered region spans residues 1–20 (MANIKSQIKRNKTNEKARLR).

The protein belongs to the bacterial ribosomal protein bS20 family.

Its function is as follows. Binds directly to 16S ribosomal RNA. The protein is Small ribosomal subunit protein bS20 of Corynebacterium efficiens (strain DSM 44549 / YS-314 / AJ 12310 / JCM 11189 / NBRC 100395).